A 388-amino-acid polypeptide reads, in one-letter code: Probable fatty acid desaturase DES1 (388 aa).

The interval 1-33 (MATTPMTVVDHEAEEAVAKAREDDKSRQVDAFD) is disordered. Positions 9–30 (VDHEAEEAVAKAREDDKSRQVD) are enriched in basic and acidic residues. 2 helical membrane passes run 62-82 (LWYVVRDVAAVVALGTAAAAM) and 85-105 (WAVWPVYWAVQGTMFWAFFVL). The Histidine box-1 motif lies at 107–111 (HDCGH). The chain crosses the membrane as a helical span at residues 119 to 139 (TLNSVVGHLLHSFILIPYHGW). A Histidine box-2 motif is present at residues 143–147 (HRTHH). The next 3 membrane-spanning stretches (helical) occupy residues 177 to 194 (IRFTAPYPLLLFPLYLFY), 226 to 246 (WCIMLASLLAMSCAFGPLQVL), and 248 to 268 (MYGLPYLVFVMWLDLVTYLHH). Residues 310–314 (HVIHH) carry the Histidine box-3 motif.

The protein belongs to the fatty acid desaturase type 1 family. As to expression, highly expressed in root hair cells. Barely detected in panicle, shoot apex, stems and leaves.

Its subcellular location is the membrane. It participates in lipid metabolism; polyunsaturated fatty acid biosynthesis. This chain is Probable fatty acid desaturase DES1, found in Sorghum bicolor (Sorghum).